The chain runs to 470 residues: MDYFPIFCQLQHKACLLVGGGEIAERKARLLLDAGALVTVNACEFTPQFHHWADQGQLSLISGEFVPELLADKWLVIAATDQLSVNALVYQSANQQRIFCNVVDDPKRTSFIMPSIIDRSPIMIAVSSGGKAPVLARLLREKLEALLPQHLGQLAGNLRQRVKQHFTVMTERRRFWEKLLTHDRLAQSLANNDHVQADQHVEQLFSAPLTDRGEVVLVGAGPGDAGLLTLKGLQQIQQADVVVYDRLVSDEVMNLVRRDAERIFVGKQSGHHCVPQEQINQILLQQAQSGKRVVRLKGGDPFIFGRGGEELEELAGYGIPFSVVPGITAASGCSAYSGIPLTHRDHAQSVRLVTGHAKKEGQLDWANLAAEKQTLVFYMGLSQAGEIQQQLIQHGMPATTQVALVENGTSRHQRVVSGELSQLALLSQQVSSPSLIIVGSVVSLREKLNWFSSRHHDDQPKVTECVAHVG.

The tract at residues Met1–Val201 is precorrin-2 dehydrogenase /sirohydrochlorin ferrochelatase. NAD(+) is bound by residues Glu22–Ile23 and Cys43–Glu44. Ser128 bears the Phosphoserine mark. The interval Gly213–Gly470 is uroporphyrinogen-III C-methyltransferase. S-adenosyl-L-methionine is bound at residue Pro222. Asp245 serves as the catalytic Proton acceptor. Lys267 functions as the Proton donor in the catalytic mechanism. S-adenosyl-L-methionine is bound by residues Gly298–Asp300, Ile303, Thr328–Ala329, Met379, and Gly408.

It in the N-terminal section; belongs to the precorrin-2 dehydrogenase / sirohydrochlorin ferrochelatase family. The protein in the C-terminal section; belongs to the precorrin methyltransferase family.

The catalysed reaction is uroporphyrinogen III + 2 S-adenosyl-L-methionine = precorrin-2 + 2 S-adenosyl-L-homocysteine + H(+). It carries out the reaction precorrin-2 + NAD(+) = sirohydrochlorin + NADH + 2 H(+). It catalyses the reaction siroheme + 2 H(+) = sirohydrochlorin + Fe(2+). Its pathway is cofactor biosynthesis; adenosylcobalamin biosynthesis; precorrin-2 from uroporphyrinogen III: step 1/1. The protein operates within cofactor biosynthesis; adenosylcobalamin biosynthesis; sirohydrochlorin from precorrin-2: step 1/1. It functions in the pathway porphyrin-containing compound metabolism; siroheme biosynthesis; precorrin-2 from uroporphyrinogen III: step 1/1. It participates in porphyrin-containing compound metabolism; siroheme biosynthesis; siroheme from sirohydrochlorin: step 1/1. Its pathway is porphyrin-containing compound metabolism; siroheme biosynthesis; sirohydrochlorin from precorrin-2: step 1/1. Its function is as follows. Multifunctional enzyme that catalyzes the SAM-dependent methylations of uroporphyrinogen III at position C-2 and C-7 to form precorrin-2 via precorrin-1. Then it catalyzes the NAD-dependent ring dehydrogenation of precorrin-2 to yield sirohydrochlorin. Finally, it catalyzes the ferrochelation of sirohydrochlorin to yield siroheme. The polypeptide is Siroheme synthase (Yersinia pestis).